The following is a 343-amino-acid chain: Heat-inducible transcription repressor HrcA (343 aa).

Belongs to the HrcA family.

Negative regulator of class I heat shock genes (grpE-dnaK-dnaJ and groELS operons). Prevents heat-shock induction of these operons. The chain is Heat-inducible transcription repressor HrcA from Mycobacterium ulcerans (strain Agy99).